The following is a 192-amino-acid chain: Thymidine kinase (192 aa).

Residues 9–16 and 87–90 each bind ATP; these read ASMNAGKS and DEAQ. Glutamate 88 serves as the catalytic Proton acceptor. Zn(2+) is bound by residues cysteine 145, cysteine 147, cysteine 182, and histidine 185.

Belongs to the thymidine kinase family. Homotetramer.

The protein resides in the cytoplasm. The catalysed reaction is thymidine + ATP = dTMP + ADP + H(+). The protein is Thymidine kinase of Novosphingobium aromaticivorans (strain ATCC 700278 / DSM 12444 / CCUG 56034 / CIP 105152 / NBRC 16084 / F199).